The primary structure comprises 310 residues: Prohibitin-2 (310 aa).

Residues 38-58 traverse the membrane as a helical; Signal-anchor for type II membrane protein segment; it reads FAGLGGLLLLGGGALFINNAL. Residues 130–144 are interaction with ATG8; it reads DVVQLPTIYRTLGQD. The AIM motif lies at 138 to 141; it reads YRTL. Positions 212–253 form a coiled coil; sequence NAVEAKQIAQQDAQRAAFVVDKARQEKQGMVVRAQGEAKSAE.

This sequence belongs to the prohibitin family. The mitochondrial prohibitin complex consists of two subunits (PHB1 and PHB2). The subunits assemble into a membrane-associated ring-shaped supercomplex of approximately 1 mDa. The mitochondrial prohibitin complex interacts with the m-AAA protease, a heterohexamer composed of YTA12/RCA1 and YTA10/AFG3. The mitochondrial prohibitin complex interacts with ATG8 and the interaction may support mitophagosome assembly. The N-terminus is blocked.

The protein localises to the mitochondrion inner membrane. In terms of biological role, prohibitin probably acts as a holdase/unfoldase for the stabilization of newly synthesized mitochondrial proteins. Involved in mitophagy; may act as an adapter for ATG8 that supports mitophagosome assembly. Negatively regulates the proteolytic processing of ATG32 via the i-AAA protease. Acts as a negative regulator of the m-AAA protease. The chain is Prohibitin-2 (PHB2) from Saccharomyces cerevisiae (strain ATCC 204508 / S288c) (Baker's yeast).